A 168-amino-acid polypeptide reads, in one-letter code: Small ribosomal subunit protein bS6 (168 aa).

Positions 103–168 are disordered; it reads RQAIAEEKEK…AAADKSDDNA (66 aa). Basic and acidic residues predominate over residues 106–115; that stretch reads IAEEKEKKAE. Low complexity predominate over residues 116-125; sequence GQAAADAAPA.

The protein belongs to the bacterial ribosomal protein bS6 family.

Its function is as follows. Binds together with bS18 to 16S ribosomal RNA. The protein is Small ribosomal subunit protein bS6 of Desulfosudis oleivorans (strain DSM 6200 / JCM 39069 / Hxd3) (Desulfococcus oleovorans).